Consider the following 445-residue polypeptide: Inositol-pentakisphosphate 2-kinase IPK1 (445 aa).

ATP contacts are provided by residues 19 to 22 (GAAN) and Arg-40. Residue Arg-127 participates in substrate binding. Residues 144–146 (SDH) and 162–164 (EIK) contribute to the ATP site. The EXKPK motif motif lies at 162–166 (EIKAK). Residues Lys-166, Lys-196, and Asn-234 each contribute to the substrate site. Position 237 (Arg-237) interacts with ATP. Zn(2+)-binding residues include His-312, Cys-322, Cys-325, and His-341. Residue Asp-363 coordinates substrate. Asp-402 is an ATP binding site. Residues Lys-406, Lys-410, and Tyr-414 each coordinate substrate.

The protein belongs to the IPK1 type 2 family. Requires Zn(2+) as cofactor.

It catalyses the reaction 1D-myo-inositol 1,3,4,5,6-pentakisphosphate + ATP = 1D-myo-inositol hexakisphosphate + ADP + H(+). Phosphorylates Ins(1,3,4,5,6)P5 at position 2 to form Ins(1,2,3,4,5,6)P6 (InsP6 or phytate). Phytate is a regulator of intracellular signaling, a highly abundant animal antinutrient, and a phosphate store in plant seeds. Also phosphorylates Ins(1,3,4,6)P4 and Ins(1,4,5,6)P4 to produce Ins(1,2,3,4,6)P5 and Ins(1,2,4,5,6)P5. The protein is Inositol-pentakisphosphate 2-kinase IPK1 of Oryza sativa subsp. indica (Rice).